A 73-amino-acid chain; its full sequence is Cx9C motif-containing protein 4, mitochondrial (73 aa).

Positions 2 to 44 (SNPCQKEACAIQDCLLSHQYDDAKCAKVIDQLYICCSKFYNDN) constitute a CHCH domain. Short sequence motifs (cx9C motif) lie at residues 5-15 (CQKEACAIQDC) and 26-36 (CAKVIDQLYIC). Cystine bridges form between C5–C36 and C15–C26.

It belongs to the CMC4 family.

The protein localises to the mitochondrion intermembrane space. The protein is Cx9C motif-containing protein 4, mitochondrial (CMC4) of Saccharomyces cerevisiae (strain ATCC 204508 / S288c) (Baker's yeast).